The chain runs to 504 residues: tRNA (uracil-5-)-methyltransferase homolog B (504 aa).

The transit peptide at 1–16 (MAGLKRRVPLHSLRYF) directs the protein to the mitochondrion. S-adenosyl-L-methionine-binding residues include glutamine 323, glutamate 373, and asparagine 423. Catalysis depends on cysteine 451, which acts as the Nucleophile. The active-site Proton acceptor is the glutamate 497.

It belongs to the class I-like SAM-binding methyltransferase superfamily. RNA M5U methyltransferase family.

It localises to the mitochondrion. The protein resides in the mitochondrion matrix. The catalysed reaction is uridine(54) in tRNA + S-adenosyl-L-methionine = 5-methyluridine(54) in tRNA + S-adenosyl-L-homocysteine + H(+). The enzyme catalyses a uridine in 12S rRNA + S-adenosyl-L-methionine = a 5-methyluridine in 12S rRNA + S-adenosyl-L-homocysteine + H(+). In terms of biological role, mitochondrial S-adenosyl-L-methionine-dependent methyltransferase that catalyzes the formation of 5-methyl-uridine in tRNAs and 12S rRNA. Catalyzes the methylation of uridine at position 54 (m5U54) in all tRNAs. Specifically methylates the uridine in position 429 of 12S rRNA (m5U429). Does not affect RNA stability or mitochondrial translation. The chain is tRNA (uracil-5-)-methyltransferase homolog B from Homo sapiens (Human).